A 214-amino-acid polypeptide reads, in one-letter code: Putative AgrB-like protein (214 aa).

Transmembrane regions (helical) follow at residues 41 to 61 (IISV…LIFL), 82 to 102 (CTLL…SSFF), 109 to 129 (IIVF…FKFA), 154 to 174 (ILTI…NLGW), and 182 to 202 (LSII…GNIL).

It belongs to the AgrB family.

The protein localises to the cell membrane. Functionally, may be involved in the proteolytic processing of a quorum sensing system signal molecule precursor. This Clostridium perfringens (strain SM101 / Type A) protein is Putative AgrB-like protein.